The primary structure comprises 112 residues: Na(+)/H(+) antiporter subunit C (112 aa).

Helical transmembrane passes span 4-21 (LMSITAGVLFMVGTYLIL), 28-50 (VVVGLILLSHGAHLLLLTMAGLQ), and 70-92 (QALILTAIVISFGVTSFLLVLAY).

This sequence belongs to the CPA3 antiporters (TC 2.A.63) subunit C family. Forms a heterooligomeric complex that consists of seven subunits: MrpA, MrpB, MrpC, MrpD, MrpE, MrpF and MrpG.

It localises to the cell membrane. In terms of biological role, mnh complex is a Na(+)Li(+)/H(+) antiporter involved in Na(+) and/or Li(+) excretion and Na(+) resistance. Na(+)/H(+) antiport consumes a transmembrane electrical potential, and is thus inferred to be electrogenic. Does not transport K(+), Ca(2+) or Mg(2+). The polypeptide is Na(+)/H(+) antiporter subunit C (mrpC) (Alkalihalophilus pseudofirmus (strain ATCC BAA-2126 / JCM 17055 / OF4) (Bacillus pseudofirmus)).